The sequence spans 1357 residues: Vascular endothelial growth factor receptor 2 (1357 aa).

The first 22 residues, 1 to 22, serve as a signal peptide directing secretion; the sequence is MAKTSYALLLLDILLTFNVAKA. Residues 23–774 are Extracellular-facing; it reads IELRFVPDPP…GAEEKMNVEL (752 aa). Ig-like C2-type domains lie at 32-120, 120-222, 216-330, 335-426, 433-553, 556-667, and 676-762; these read PTLN…SVAV, VYVF…VAVV, PYIV…ASLI, PFIA…RTFQ, PRIF…VIVF, TRFL…LLHN, and SRIV…ARIS. N-linked (GlcNAc...) asparagine glycans are attached at residues Asn-35, Asn-44, Asn-66, Asn-97, Asn-161, Asn-209, Asn-247, Asn-272, Asn-303, Asn-307, Asn-407, Asn-501, Asn-560, Asn-621, Asn-631, Asn-640, Asn-681, Asn-688, and Asn-713. 2 disulfide bridges follow: Cys-53–Cys-104 and Cys-153–Cys-203. A disulfide bridge links Cys-248 with Cys-314. Cys-457 and Cys-538 are joined by a disulfide. Cys-579 and Cys-651 are oxidised to a cystine. Cysteines 697 and 746 form a disulfide. A helical transmembrane segment spans residues 775–795; sequence IMPIGAVVIAMFLWLLIVFVI. Over 796–1357 the chain is Cytoplasmic; it reads RNRKRPNDGD…AEVRYSAPPV (562 aa). In terms of domain architecture, Protein kinase spans 843–1173; the sequence is LKLGEPLGRG…FTQLVEHLGN (331 aa). ATP-binding positions include 849 to 857 and Lys-877; that span reads LGRGAFGQV. Positions 944–975 are disordered; the sequence is YSPYKKRTPRMPNRREVQQDEDPREGDLGLGT. Asp-1039 acts as the Proton acceptor in catalysis. Tyr-1065, Tyr-1070, Tyr-1186, and Tyr-1222 each carry phosphotyrosine; by autocatalysis. Residues 1296-1357 are disordered; that stretch reads SLASESSNQT…AEVRYSAPPV (62 aa). Residues 1298–1312 show a composition bias toward polar residues; the sequence is ASESSNQTSGYQSGY.

The protein belongs to the protein kinase superfamily. Tyr protein kinase family. CSF-1/PDGF receptor subfamily. Interacts with isoform VEGF165 of vegfaa and, to a lesser extent, with isoform VEGF171 of vegfab. Interacts (via juxtamembrane region) with chaperone pdcl3 (via thioredoxin fold region); the interaction leads to increased vegfr2 abundance through inhibition of its ubiquitination and degradation. First expressed in embryos between 5- and 7-somites in the bilateral stripes that contain the developing angioblasts, and then localized to the intermediate cell mass (ICM) and the developing vasculature. By 30 hpf, expressed in the major trunk, head and intersomitic vessels, persisting through 4 dpf when expression is seen in developing subintestinal veins and in the remaining vasculature.

It localises to the cell membrane. The protein resides in the cytoplasm. It is found in the nucleus. The protein localises to the cytoplasmic vesicle. Its subcellular location is the early endosome. It localises to the cell junction. The protein resides in the endoplasmic reticulum. The enzyme catalyses L-tyrosyl-[protein] + ATP = O-phospho-L-tyrosyl-[protein] + ADP + H(+). Its function is as follows. Receptor for VEGF or VEGFC. Has a tyrosine-protein kinase activity. Combinations of multiple VEGF receptors are required for development of different blood vessel types in the embryo. Involved in angiogenesis, specifically in VEGF-induced sprouting of new blood vessels. Particularly involved in artery formation. Does not appear to be required for hematopoiesis. This Danio rerio (Zebrafish) protein is Vascular endothelial growth factor receptor 2.